A 333-amino-acid chain; its full sequence is Ketol-acid reductoisomerase (NADP(+)) (333 aa).

The region spanning 2 to 182 is the KARI N-terminal Rossmann domain; sequence AELFYDDDAD…GGTRAGVIKT (181 aa). NADP(+)-binding positions include 25–28, Ser51, Ser53, and 83–86; these read YGSQ and DPIQ. The active site involves His108. Gly134 contributes to the NADP(+) binding site. A KARI C-terminal knotted domain is found at 183–328; that stretch reads TFTEETETDL…RELRKLMSWV (146 aa). Mg(2+)-binding residues include Asp191, Glu195, Glu227, and Glu231. Residue Ser252 participates in substrate binding.

This sequence belongs to the ketol-acid reductoisomerase family. The cofactor is Mg(2+).

The catalysed reaction is (2R)-2,3-dihydroxy-3-methylbutanoate + NADP(+) = (2S)-2-acetolactate + NADPH + H(+). It carries out the reaction (2R,3R)-2,3-dihydroxy-3-methylpentanoate + NADP(+) = (S)-2-ethyl-2-hydroxy-3-oxobutanoate + NADPH + H(+). Its pathway is amino-acid biosynthesis; L-isoleucine biosynthesis; L-isoleucine from 2-oxobutanoate: step 2/4. It participates in amino-acid biosynthesis; L-valine biosynthesis; L-valine from pyruvate: step 2/4. Involved in the biosynthesis of branched-chain amino acids (BCAA). Catalyzes an alkyl-migration followed by a ketol-acid reduction of (S)-2-acetolactate (S2AL) to yield (R)-2,3-dihydroxy-isovalerate. In the isomerase reaction, S2AL is rearranged via a Mg-dependent methyl migration to produce 3-hydroxy-3-methyl-2-ketobutyrate (HMKB). In the reductase reaction, this 2-ketoacid undergoes a metal-dependent reduction by NADPH to yield (R)-2,3-dihydroxy-isovalerate. This is Ketol-acid reductoisomerase (NADP(+)) from Streptomyces griseus subsp. griseus (strain JCM 4626 / CBS 651.72 / NBRC 13350 / KCC S-0626 / ISP 5235).